Here is a 269-residue protein sequence, read N- to C-terminus: Microtubule-associated protein RP/EB family member 1 (269 aa).

The Calponin-homology (CH) domain maps to 14 to 116; that stretch reads NLSRHDMLAW…FVQWFKKFFD (103 aa). The tract at residues 168–190 is disordered; the sequence is RTAVSNKPPAQGISKKPATVGNG. The EB1 C-terminal domain maps to 186–256; sequence TVGNGDDESA…LYATDEGFVI (71 aa).

It belongs to the MAPRE family.

It localises to the cytoplasm. Its subcellular location is the cytoskeleton. The protein resides in the microtubule organizing center. The protein localises to the centrosome. It is found in the golgi apparatus. It localises to the spindle. Its subcellular location is the spindle pole. In terms of biological role, plus-end tracking protein (+TIP) that binds to the plus-end of microtubules and regulates the dynamics of the microtubule cytoskeleton. Promotes cytoplasmic microtubule nucleation and elongation. Involved in mitotic spindle positioning by stabilizing microtubules and promoting dynamic connection between astral microtubules and the cortex during mitotic chromosome segregation. This is Microtubule-associated protein RP/EB family member 1 (mapre1) from Xenopus tropicalis (Western clawed frog).